The sequence spans 205 residues: ATP phosphoribosyltransferase (205 aa).

Belongs to the ATP phosphoribosyltransferase family. Short subfamily. In terms of assembly, heteromultimer composed of HisG and HisZ subunits.

It localises to the cytoplasm. The catalysed reaction is 1-(5-phospho-beta-D-ribosyl)-ATP + diphosphate = 5-phospho-alpha-D-ribose 1-diphosphate + ATP. It participates in amino-acid biosynthesis; L-histidine biosynthesis; L-histidine from 5-phospho-alpha-D-ribose 1-diphosphate: step 1/9. Functionally, catalyzes the condensation of ATP and 5-phosphoribose 1-diphosphate to form N'-(5'-phosphoribosyl)-ATP (PR-ATP). Has a crucial role in the pathway because the rate of histidine biosynthesis seems to be controlled primarily by regulation of HisG enzymatic activity. This chain is ATP phosphoribosyltransferase, found in Staphylococcus carnosus (strain TM300).